Reading from the N-terminus, the 117-residue chain is UPF0231 protein HI_1724 (117 aa).

This sequence belongs to the UPF0231 family.

The protein is UPF0231 protein HI_1724 of Haemophilus influenzae (strain ATCC 51907 / DSM 11121 / KW20 / Rd).